The chain runs to 430 residues: Serine--tRNA ligase (430 aa).

The segment at 103–127 is disordered; that stretch reads LPNIPDDDVPDGRDENDNQEVSRWG. An L-serine-binding site is contributed by 237–239; the sequence is TAE. 268–270 contributes to the ATP binding site; the sequence is RSE. An L-serine-binding site is contributed by E291. Position 355–358 (355–358) interacts with ATP; that stretch reads EISS. S391 provides a ligand contact to L-serine.

Belongs to the class-II aminoacyl-tRNA synthetase family. Type-1 seryl-tRNA synthetase subfamily. Homodimer. The tRNA molecule binds across the dimer.

It localises to the cytoplasm. It catalyses the reaction tRNA(Ser) + L-serine + ATP = L-seryl-tRNA(Ser) + AMP + diphosphate + H(+). The catalysed reaction is tRNA(Sec) + L-serine + ATP = L-seryl-tRNA(Sec) + AMP + diphosphate + H(+). Its pathway is aminoacyl-tRNA biosynthesis; selenocysteinyl-tRNA(Sec) biosynthesis; L-seryl-tRNA(Sec) from L-serine and tRNA(Sec): step 1/1. Catalyzes the attachment of serine to tRNA(Ser). Is also able to aminoacylate tRNA(Sec) with serine, to form the misacylated tRNA L-seryl-tRNA(Sec), which will be further converted into selenocysteinyl-tRNA(Sec). The polypeptide is Serine--tRNA ligase (Sodalis glossinidius (strain morsitans)).